Here is a 165-residue protein sequence, read N- to C-terminus: Phosphopantetheine adenylyltransferase (165 aa).

Thr11 serves as a coordination point for substrate. ATP contacts are provided by residues 11 to 12 and His19; that span reads TF. Substrate-binding residues include Lys43, Val75, and Arg89. Residues 90-92, Glu100, and 125-131 each bind ATP; these read GLR and YQFISST.

This sequence belongs to the bacterial CoaD family. As to quaternary structure, homohexamer. Mg(2+) serves as cofactor.

The protein localises to the cytoplasm. It catalyses the reaction (R)-4'-phosphopantetheine + ATP + H(+) = 3'-dephospho-CoA + diphosphate. The protein operates within cofactor biosynthesis; coenzyme A biosynthesis; CoA from (R)-pantothenate: step 4/5. In terms of biological role, reversibly transfers an adenylyl group from ATP to 4'-phosphopantetheine, yielding dephospho-CoA (dPCoA) and pyrophosphate. This chain is Phosphopantetheine adenylyltransferase, found in Acidovorax ebreus (strain TPSY) (Diaphorobacter sp. (strain TPSY)).